We begin with the raw amino-acid sequence, 320 residues long: Lipoyl synthase (320 aa).

Residues Cys66, Cys71, Cys77, Cys92, Cys96, Cys99, and Ser306 each coordinate [4Fe-4S] cluster. The Radical SAM core domain occupies 77–295 (CFGHGTATFM…AEIGYAMGFS (219 aa)).

It belongs to the radical SAM superfamily. Lipoyl synthase family. [4Fe-4S] cluster serves as cofactor.

Its subcellular location is the cytoplasm. It carries out the reaction [[Fe-S] cluster scaffold protein carrying a second [4Fe-4S](2+) cluster] + N(6)-octanoyl-L-lysyl-[protein] + 2 oxidized [2Fe-2S]-[ferredoxin] + 2 S-adenosyl-L-methionine + 4 H(+) = [[Fe-S] cluster scaffold protein] + N(6)-[(R)-dihydrolipoyl]-L-lysyl-[protein] + 4 Fe(3+) + 2 hydrogen sulfide + 2 5'-deoxyadenosine + 2 L-methionine + 2 reduced [2Fe-2S]-[ferredoxin]. It functions in the pathway protein modification; protein lipoylation via endogenous pathway; protein N(6)-(lipoyl)lysine from octanoyl-[acyl-carrier-protein]: step 2/2. Catalyzes the radical-mediated insertion of two sulfur atoms into the C-6 and C-8 positions of the octanoyl moiety bound to the lipoyl domains of lipoate-dependent enzymes, thereby converting the octanoylated domains into lipoylated derivatives. The sequence is that of Lipoyl synthase from Thioalkalivibrio sulfidiphilus (strain HL-EbGR7).